Here is an 87-residue protein sequence, read N- to C-terminus: COMM domain-containing protein 6 (87 aa).

An N-acetylmethionine modification is found at Met-1. Residues 20–87 form the COMM domain; sequence QLIDFQWKLG…KEIAAVIETV (68 aa).

Belongs to the COMM domain-containing protein 6 family. As to quaternary structure, component of the commander complex consisting of the CCC subcomplex and the retriever subcomplex. Component of the CCC (COMMD/CCDC22/CCDC93) subcomplex consisting of COMMD1, COMMD2, COMMD3, COMMD4, COMMD5, COMMD6, COMMD7, COMMD8, COMMD9, COMMD10, CCDC22 and CCDC93; within the complex forms a heterodimer with COMMD1. May form a homodimer with isoform 1. Interacts with RELA, RELB, NFKB1/p105. Does not interact with NFKBIB. Interacts with CCDC22, CCDC93, SCNN1B, CUL4A.

The protein localises to the nucleus. It is found in the cytoplasm. Its function is as follows. Scaffold protein in the commander complex that is essential for endosomal recycling of transmembrane cargos; the commander complex is composed of the CCC subcomplex and the retriever subcomplex. May modulate activity of cullin-RING E3 ubiquitin ligase (CRL) complexes. Down-regulates activation of NF-kappa-B. Inhibits TNF-induced NFKB1 activation. In Mus musculus (Mouse), this protein is COMM domain-containing protein 6 (Commd6).